A 553-amino-acid chain; its full sequence is Adenine deaminase (553 aa).

Belongs to the metallo-dependent hydrolases superfamily. Adenine deaminase family. Mn(2+) serves as cofactor.

It catalyses the reaction adenine + H2O + H(+) = hypoxanthine + NH4(+). This is Adenine deaminase from Methanosarcina acetivorans (strain ATCC 35395 / DSM 2834 / JCM 12185 / C2A).